Consider the following 1300-residue polypeptide: Sal-like protein 3 (1300 aa).

Basic residues predominate over residues 1-11 (MSRRKQAKPQH). Disordered regions lie at residues 1 to 51 (MSRR…EETS), 84 to 162 (EDAP…YGAP), 234 to 258 (QRPP…PSQL), and 277 to 352 (GSGP…GSLL). The C2H2-type 1; atypical zinc-finger motif lies at 51–73 (SVCEKCCAEFFKWADFLEHQRSC). A compositionally biased stretch (pro residues) spans 87–100 (PAPPPEDFPEPSPA). Ser-109 is modified (phosphoserine). Positions 122–132 (GEARPVEKEAE) are enriched in basic and acidic residues. Residues 145 to 157 (PRPPPAAPAPPTP) are compositionally biased toward pro residues. 2 stretches are compositionally biased toward low complexity: residues 277 to 319 (GSGP…AAPA) and 329 to 352 (PQSA…GSLL). 2 C2H2-type zinc fingers span residues 420-442 (HKCR…LRSH) and 448-470 (FKCN…FQRH). The interval 523-633 (PTSVGLQLPP…VDGAPTSLGS (111 aa)) is disordered. Residues 543–561 (SPSATPASRSPQRPSPASS) show a composition bias toward low complexity. Over residues 577–586 (VSATAESPQS) the composition is skewed to polar residues. 3 C2H2-type zinc fingers span residues 679–701 (NQCV…YRTH), 707–729 (FKCK…FGVH), and 739–761 (HSCP…IRMH). The segment at 864 to 955 (SVENGSGESD…GSGGAPGRAG (92 aa)) is disordered. The segment covering 889–910 (RSAGSPALSESSSSQALSPAPS) has biased composition (low complexity). A Phosphoserine modification is found at Ser-919. C2H2-type zinc fingers lie at residues 977–999 (TVCG…YRSH), 1005–1027 (FVCA…LLTH), 1113–1135 (HNCQ…ERTH), and 1141–1163 (FGCT…MGTH). Position 1177 is a phosphoserine (Ser-1177). The segment at 1259–1279 (GMDKARTGSSPPIVSLDKASS) is disordered.

The protein belongs to the sal C2H2-type zinc-finger protein family. Widely expressed in adult with highest levels in heart. Expressed in fetal brain (in neurons of hippocampus, cortex, mediodorsal and ventrolateral thalamic nuclei, putamen, cerebellum and brainstem).

It localises to the nucleus. Probable transcription factor. This Homo sapiens (Human) protein is Sal-like protein 3 (SALL3).